Consider the following 212-residue polypeptide: Placenta-specific protein 1 (212 aa).

A signal peptide spans 1–22 (MKVFKFIGLMILLTSAFSAGSG).

Belongs to the PLAC1 family. As to expression, expressed in placenta. Localizes primarily to differentiated syncytiotrophoblast throughout gestation as well as to a small population of villous cytotrophoblasts. Also detected in maternal blood and rapidly disappears following delivery, but is not detected in other adult or fetal tissues examined.

It is found in the secreted. May play a role in placental development. The polypeptide is Placenta-specific protein 1 (Homo sapiens (Human)).